The following is a 143-amino-acid chain: Small ribosomal subunit protein eS12 (143 aa).

This sequence belongs to the eukaryotic ribosomal protein eS12 family.

The protein is Small ribosomal subunit protein eS12 (RPS12) of Hordeum vulgare (Barley).